Consider the following 309-residue polypeptide: Sulfate adenylyltransferase subunit 2 (309 aa).

Belongs to the PAPS reductase family. CysD subfamily. Heterodimer composed of CysD, the smaller subunit, and CysN.

The enzyme catalyses sulfate + ATP + H(+) = adenosine 5'-phosphosulfate + diphosphate. The protein operates within sulfur metabolism; hydrogen sulfide biosynthesis; sulfite from sulfate: step 1/3. Functionally, with CysN forms the ATP sulfurylase (ATPS) that catalyzes the adenylation of sulfate producing adenosine 5'-phosphosulfate (APS) and diphosphate, the first enzymatic step in sulfur assimilation pathway. APS synthesis involves the formation of a high-energy phosphoric-sulfuric acid anhydride bond driven by GTP hydrolysis by CysN coupled to ATP hydrolysis by CysD. The polypeptide is Sulfate adenylyltransferase subunit 2 (Aeromonas salmonicida (strain A449)).